A 238-amino-acid polypeptide reads, in one-letter code: Sugar fermentation stimulation protein homolog (238 aa).

This sequence belongs to the SfsA family.

This chain is Sugar fermentation stimulation protein homolog, found in Actinobacillus succinogenes (strain ATCC 55618 / DSM 22257 / CCUG 43843 / 130Z).